The primary structure comprises 405 residues: Diaminopimelate decarboxylase (405 aa).

Lys46 is modified (N6-(pyridoxal phosphate)lysine). Pyridoxal 5'-phosphate contacts are provided by residues Gly225 and 259–262 (EPGR). Positions 262, 298, and 302 each coordinate substrate. The Proton donor role is filled by Cys329. Substrate-binding residues include Glu330 and Tyr358. Residue Tyr358 participates in pyridoxal 5'-phosphate binding.

This sequence belongs to the Orn/Lys/Arg decarboxylase class-II family. LysA subfamily. In terms of assembly, homodimer. Pyridoxal 5'-phosphate is required as a cofactor.

It carries out the reaction meso-2,6-diaminopimelate + H(+) = L-lysine + CO2. It participates in amino-acid biosynthesis; L-lysine biosynthesis via DAP pathway; L-lysine from DL-2,6-diaminopimelate: step 1/1. Its function is as follows. Specifically catalyzes the decarboxylation of meso-diaminopimelate (meso-DAP) to L-lysine. The chain is Diaminopimelate decarboxylase from Helicobacter pylori (strain ATCC 700392 / 26695) (Campylobacter pylori).